Reading from the N-terminus, the 220-residue chain is Demethylmenaquinone methyltransferase (220 aa).

S-adenosyl-L-methionine-binding positions include threonine 47, aspartate 67, and 93–94 (DA).

Belongs to the class I-like SAM-binding methyltransferase superfamily. MenG/UbiE family.

It carries out the reaction a 2-demethylmenaquinol + S-adenosyl-L-methionine = a menaquinol + S-adenosyl-L-homocysteine + H(+). It participates in quinol/quinone metabolism; menaquinone biosynthesis; menaquinol from 1,4-dihydroxy-2-naphthoate: step 2/2. Methyltransferase required for the conversion of demethylmenaquinol (DMKH2) to menaquinol (MKH2). This Thermus thermophilus (strain ATCC BAA-163 / DSM 7039 / HB27) protein is Demethylmenaquinone methyltransferase.